A 373-amino-acid chain; its full sequence is Probable jasmonic acid carboxyl methyltransferase 1 (373 aa).

S-adenosyl-L-homocysteine is bound at residue Tyr18. Gln25 provides a ligand contact to jasmonate. S-adenosyl-L-homocysteine contacts are provided by Cys59, Asn64, Asp96, Leu97, Ser135, and Phe136. Residues His156 and Trp157 each coordinate jasmonate. The Mg(2+) site is built by Asn174, Asp260, Phe262, and Asn263.

The protein belongs to the methyltransferase superfamily. Type-7 methyltransferase family. It depends on Mg(2+) as a cofactor.

The protein resides in the cytoplasm. Its subcellular location is the nucleus. It carries out the reaction jasmonate + S-adenosyl-L-methionine = methyl (-)-jasmonate + S-adenosyl-L-homocysteine. It participates in lipid metabolism; oxylipin biosynthesis. Catalyzes the methylation of jasmonate into methyljasmonate, a plant volatile that acts as an important cellular regulator mediating diverse developmental processes and defense responses. The polypeptide is Probable jasmonic acid carboxyl methyltransferase 1 (Theobroma cacao (Cacao)).